The chain runs to 696 residues: Elongation factor G (696 aa).

Residues 8-286 (EDVRNIGIAA…AVVAYLPAPT (279 aa)) enclose the tr-type G domain. Residues 17–24 (AHIDAGKT), 81–85 (DTPGH), and 135–138 (NKMD) contribute to the GTP site.

It belongs to the TRAFAC class translation factor GTPase superfamily. Classic translation factor GTPase family. EF-G/EF-2 subfamily.

Its subcellular location is the cytoplasm. Catalyzes the GTP-dependent ribosomal translocation step during translation elongation. During this step, the ribosome changes from the pre-translocational (PRE) to the post-translocational (POST) state as the newly formed A-site-bound peptidyl-tRNA and P-site-bound deacylated tRNA move to the P and E sites, respectively. Catalyzes the coordinated movement of the two tRNA molecules, the mRNA and conformational changes in the ribosome. The sequence is that of Elongation factor G from Sulfurimonas denitrificans (strain ATCC 33889 / DSM 1251) (Thiomicrospira denitrificans (strain ATCC 33889 / DSM 1251)).